The primary structure comprises 126 residues: Large ribosomal subunit protein bL12 (126 aa).

The protein belongs to the bacterial ribosomal protein bL12 family. Homodimer. Part of the ribosomal stalk of the 50S ribosomal subunit. Forms a multimeric L10(L12)X complex, where L10 forms an elongated spine to which 2 to 4 L12 dimers bind in a sequential fashion. Binds GTP-bound translation factors.

Forms part of the ribosomal stalk which helps the ribosome interact with GTP-bound translation factors. Is thus essential for accurate translation. The chain is Large ribosomal subunit protein bL12 from Bifidobacterium longum subsp. infantis (strain ATCC 15697 / DSM 20088 / JCM 1222 / NCTC 11817 / S12).